A 164-amino-acid chain; its full sequence is MDMDAKQAVIAKLDELKINYTLIEHDPVYTIEEMEKIDIENVDYIVKNLFLRDAKGRQHYLVVADKDQKIDLKTLQDKIGSTKLSFASEDRLQKYLKLTKGAVSPFGVLNDETAEVEVVFDKNLVGRSCVAVHPNDNSATVVLSYEDLEKIVKANGNTFKAIEL.

It belongs to the PRORSD1 family.

Its subcellular location is the cytoplasm. Functionally, functions in trans to edit the amino acid moiety from incorrectly charged Ala-tRNA(Pro). Has weak activity on correctly charged tRNA(Ala), tRNA(Gly) as well as tRNA(Cys), tRNA(Met), tRNA(Pro), tRNA(Ser) and tRNA(Leu). This Acetoanaerobium sticklandii (strain ATCC 12662 / DSM 519 / JCM 1433 / CCUG 9281 / NCIMB 10654 / HF) (Clostridium sticklandii) protein is Prolyl-tRNA editing protein ProX (proX).